The sequence spans 415 residues: Beta-1,4-glucuronyltransferase 1 (415 aa).

Residues Met1–Arg8 lie on the Cytoplasmic side of the membrane. The chain crosses the membrane as a helical; Signal-anchor for type II membrane protein span at residues Cys9–Leu36. At His37 to Cys415 the chain is on the lumenal side. N-linked (GlcNAc...) asparagine glycosylation occurs at Asn204. Mn(2+) contacts are provided by Asp227 and Asp229. N-linked (GlcNAc...) asparagine glycosylation occurs at Asn300.

This sequence belongs to the glycosyltransferase 49 family. In terms of assembly, interacts with LARGE1 and LARGE2. It depends on Mn(2+) as a cofactor.

It is found in the golgi apparatus membrane. It catalyses the reaction 3-O-[beta-D-Xyl-(1-&gt;4)-Rib-ol-P-Rib-ol-P-3-beta-D-GalNAc-(1-&gt;3)-beta-D-GlcNAc-(1-&gt;4)-(O-6-P-alpha-D-Man)]-Thr-[protein] + UDP-alpha-D-glucuronate = 3-O-[beta-D-GlcA-(1-&gt;3)-beta-D-Xyl-(1-&gt;4)-Rib-ol-P-Rib-ol-P-3-beta-D-GalNAc-(1-&gt;3)-beta-D-GlcNAc-(1-&gt;4)-(O-6-P-alpha-D-Man)]-Thr-[protein] + UDP + H(+). It participates in protein modification; protein glycosylation. Beta-1,4-glucuronyltransferase involved in O-mannosylation of alpha-dystroglycan (DAG1). Transfers a glucuronic acid (GlcA) residue onto a xylose (Xyl) acceptor to produce the glucuronyl-beta-1,4-xylose-beta disaccharide primer, which is further elongated by LARGE1, during synthesis of phosphorylated O-mannosyl glycan. Phosphorylated O-mannosyl glycan is a carbohydrate structure present in alpha-dystroglycan (DAG1), which is required for binding laminin G-like domain-containing extracellular proteins with high affinity. Required for axon guidance; via its function in O-mannosylation of alpha-dystroglycan (DAG1). The chain is Beta-1,4-glucuronyltransferase 1 from Bos taurus (Bovine).